Reading from the N-terminus, the 488-residue chain is Probable apyrase 5 (488 aa).

Residues 1–26 (MDALKVQILPDNQSSPSSTHMLTKPK) are disordered. Residues 1–32 (MDALKVQILPDNQSSPSSTHMLTKPKSKKATK) are Cytoplasmic-facing. Polar residues predominate over residues 10-21 (PDNQSSPSSTHM). Residues 33-53 (SIAMLIVASLAITLGLLFVFS) form a helical; Signal-anchor for type II membrane protein membrane-spanning segment. Topologically, residues 54–488 (SNSVMFSASF…GKSRKMIGFK (435 aa)) are extracellular. 73 to 83 (VIIDAGSSGTR) serves as a coordination point for ATP. Glu-196 serves as the catalytic Proton acceptor. 220 to 230 (GIVELGGASAQ) contacts ATP. Asn-251 is a glycosylation site (N-linked (GlcNAc...) asparagine).

This sequence belongs to the GDA1/CD39 NTPase family. The cofactor is Ca(2+). As to expression, highly expressed in young rosette leaves but only weakly in roots.

The protein localises to the membrane. It carries out the reaction a ribonucleoside 5'-triphosphate + 2 H2O = a ribonucleoside 5'-phosphate + 2 phosphate + 2 H(+). Its function is as follows. Catalyzes the hydrolysis of phosphoanhydride bonds of nucleoside tri- and di-phosphates. In Arabidopsis thaliana (Mouse-ear cress), this protein is Probable apyrase 5 (APY5).